The following is a 381-amino-acid chain: Arrestin homolog (381 aa).

This sequence belongs to the arrestin family.

The protein is Arrestin homolog of Heliothis virescens (Tobacco budworm moth).